Here is a 358-residue protein sequence, read N- to C-terminus: MFERLEQIETRYEELGREMADPALIADQQKYQKTAKQHRELEDVVEKFREYREVQNGIADARGMMNEADAEIRAMAEEELASLEERLPQIEADLKLLLLPKDPNDEKNVVVEIRAGTGGDEASLFAAEVFRMYARYAEQRRWKVEVLSMSESSVGGAKEVIAIIEGDHVYSQMKYESGVHRVQRVPATETQGRVHTSAITVAVLPEAEEVDVKIEAKDLRIDTFCSSGPGGQSVNTTYSAVRITHLPTNTVVSCQDEKSQIKNREKAMRVLRSRLYEVEMERQQQALAKERKQQVGSGDRSEKIRTYNFPQNRLTDHRIGLTIHQLAEVMEGRLQPVIDALTAHFNAERLKAESEAVA.

Glutamine 232 bears the N5-methylglutamine mark.

This sequence belongs to the prokaryotic/mitochondrial release factor family. In terms of processing, methylated by PrmC. Methylation increases the termination efficiency of RF1.

It localises to the cytoplasm. Peptide chain release factor 1 directs the termination of translation in response to the peptide chain termination codons UAG and UAA. This is Peptide chain release factor 1 from Acidobacterium capsulatum (strain ATCC 51196 / DSM 11244 / BCRC 80197 / JCM 7670 / NBRC 15755 / NCIMB 13165 / 161).